The following is a 303-amino-acid chain: UDP-3-O-acyl-N-acetylglucosamine deacetylase (303 aa).

Residues His78, His237, and Asp241 each coordinate Zn(2+). Residue His264 is the Proton donor of the active site.

This sequence belongs to the LpxC family. Zn(2+) serves as cofactor.

The enzyme catalyses a UDP-3-O-[(3R)-3-hydroxyacyl]-N-acetyl-alpha-D-glucosamine + H2O = a UDP-3-O-[(3R)-3-hydroxyacyl]-alpha-D-glucosamine + acetate. It functions in the pathway glycolipid biosynthesis; lipid IV(A) biosynthesis; lipid IV(A) from (3R)-3-hydroxytetradecanoyl-[acyl-carrier-protein] and UDP-N-acetyl-alpha-D-glucosamine: step 2/6. In terms of biological role, catalyzes the hydrolysis of UDP-3-O-myristoyl-N-acetylglucosamine to form UDP-3-O-myristoylglucosamine and acetate, the committed step in lipid A biosynthesis. In Pseudomonas fluorescens (strain ATCC BAA-477 / NRRL B-23932 / Pf-5), this protein is UDP-3-O-acyl-N-acetylglucosamine deacetylase.